A 457-amino-acid polypeptide reads, in one-letter code: Exodeoxyribonuclease 7 large subunit (457 aa).

The protein belongs to the XseA family. As to quaternary structure, heterooligomer composed of large and small subunits.

Its subcellular location is the cytoplasm. It catalyses the reaction Exonucleolytic cleavage in either 5'- to 3'- or 3'- to 5'-direction to yield nucleoside 5'-phosphates.. Bidirectionally degrades single-stranded DNA into large acid-insoluble oligonucleotides, which are then degraded further into small acid-soluble oligonucleotides. This chain is Exodeoxyribonuclease 7 large subunit, found in Citrobacter koseri (strain ATCC BAA-895 / CDC 4225-83 / SGSC4696).